Reading from the N-terminus, the 473-residue chain is Mitochondrial adenyl nucleotide antiporter SLC25A24-B (473 aa).

The tract at residues 1–173 (MLEQVQKFLL…RYWKHSTVLD (173 aa)) is regulatory N-terminal domain. Residues 1 to 197 (MLEQVQKFLL…EKKTGQWWKQ (197 aa)) are Mitochondrial intermembrane-facing. 4 consecutive EF-hand domains span residues 19–54 (DSQS…MGME), 55–88 (VGKG…EEHE), 86–121 (EHEK…LGIK), and 122–157 (ISLD…NPAD). Residues D32, N34, D36, K38, E43, D68, N70, D72, H74, E79, D99, N101, D103, K105, E110, D135, D137, T139, T141, and E146 each contribute to the Ca(2+) site. The linker region stretch occupies residues 159–168 (IQQIIRYWKH). A C-terminal transmembrane transporter domain region spans residues 174–473 (IGDSLTIPDE…YEKMKVQLGI (300 aa)). Solcar repeat units lie at residues 192–277 (GQWW…YKKL), 285–370 (LGTA…LKNY), and 382–470 (PGVL…MKVQ). Residues 198–215 (LMAGGMAGAVSRTGTAPL) traverse the membrane as a helical segment. Topologically, residues 216–251 (DRLKVMMQVHGSKGNSNIITGLKQMVKEGGIRSLWR) are mitochondrial matrix. The helical transmembrane segment at 252 to 271 (GNGVNVIKIAPETAMKFWAY) threads the bilayer. Residues 272–294 (EQYKKLFTSESGKLGTAERFVAG) are Mitochondrial intermembrane-facing. The chain crosses the membrane as a helical span at residues 295–308 (SLAGATAQTSIYPM). Residues 309 to 344 (EVLKTRLAVGRTGQYSGMFDCAKKIMQKEGIRAFYK) lie on the Mitochondrial matrix side of the membrane. Residues 345-364 (GYIPNILGIIPYAGIDLAIY) form a helical membrane-spanning segment. Topologically, residues 365–387 (ETLKNYWLQNHAKDSANPGVLVL) are mitochondrial intermembrane. The chain crosses the membrane as a helical span at residues 388-405 (LGCGTASSTCGQLASYPL). At 406 to 444 (ALIRTRMQAQASIEGAPQLNMGGLFRKIVAKEGFLGLYR) the chain is on the mitochondrial matrix side. A helical transmembrane segment spans residues 445–464 (GIGPNFLKVLPAVSISYVVY). The Mitochondrial intermembrane segment spans residues 465 to 473 (EKMKVQLGI).

The protein belongs to the mitochondrial carrier (TC 2.A.29) family. Monomer.

It is found in the mitochondrion inner membrane. The enzyme catalyses Mg(2+)(out) + phosphate(in) + ATP(out) = Mg(2+)(in) + phosphate(out) + ATP(in). It catalyses the reaction ADP(out) + phosphate(in) + H(+)(out) = ADP(in) + phosphate(out) + H(+)(in). It carries out the reaction AMP(out) + phosphate(in) = AMP(in) + phosphate(out). The catalysed reaction is phosphate(in) + ATP(out) + 2 H(+)(out) = phosphate(out) + ATP(in) + 2 H(+)(in). The enzyme catalyses dADP(in) + ADP(out) = dADP(out) + ADP(in). It catalyses the reaction Mg(2+)(in) + ADP(out) + ATP(in) + H(+)(out) = Mg(2+)(out) + ADP(in) + ATP(out) + H(+)(in). It carries out the reaction ADP(out) + diphosphate(in) = ADP(in) + diphosphate(out). The catalysed reaction is dAMP(in) + ADP(out) + H(+)(out) = dAMP(out) + ADP(in) + H(+)(in). The enzyme catalyses 3'-AMP(in) + ADP(out) + H(+)(out) = 3'-AMP(out) + ADP(in) + H(+)(in). It catalyses the reaction dAMP(out) + phosphate(in) = dAMP(in) + phosphate(out). It carries out the reaction 3'-AMP(out) + phosphate(in) = 3'-AMP(in) + phosphate(out). The catalysed reaction is dADP(out) + phosphate(in) + H(+)(out) = dADP(in) + phosphate(out) + H(+)(in). With respect to regulation, activated by an increase in cytosolic calcium levels that induce a conformational change of the N-terminal regulatory domain, uncapping the channel and allowing transport. Inhibited by bathophenanthroline, mersalyl, p-hydroxymercuribenzoate, bromcresol purple and tannic acid. In terms of biological role, electroneutral antiporter that mediates the transport of adenyl nucleotides through the inner mitochondrial membrane. Originally identified as an ATP-magnesium/inorganic phosphate antiporter, it also acts as a broad specificity adenyl nucleotide antiporter. By regulating the mitochondrial matrix adenyl nucleotide pool could adapt to changing cellular energetic demands and indirectly regulate adenyl nucleotide-dependent metabolic pathways. The chain is Mitochondrial adenyl nucleotide antiporter SLC25A24-B (slc25a24-b) from Xenopus laevis (African clawed frog).